Consider the following 76-residue polypeptide: UPF0248 protein MmarC5_1387 (76 aa).

Belongs to the UPF0248 family.

This chain is UPF0248 protein MmarC5_1387, found in Methanococcus maripaludis (strain C5 / ATCC BAA-1333).